Reading from the N-terminus, the 117-residue chain is NADH-quinone oxidoreductase subunit A (117 aa).

3 helical membrane-spanning segments follow: residues 4–24, 64–84, and 86–106; these read WIGVALFIVVGIVFGAGGMLT, LMFVIFDVEVIYLYPWAVSFV, and LGLAGLIKMFLFIFILVLGLW.

This sequence belongs to the complex I subunit 3 family. As to quaternary structure, NDH-1 is composed of 14 different subunits. Subunits NuoA, H, J, K, L, M, N constitute the membrane sector of the complex.

It localises to the cell membrane. It carries out the reaction a quinone + NADH + 5 H(+)(in) = a quinol + NAD(+) + 4 H(+)(out). Functionally, NDH-1 shuttles electrons from NADH, via FMN and iron-sulfur (Fe-S) centers, to quinones in the respiratory chain. The immediate electron acceptor for the enzyme in this species is believed to be a menaquinone. Couples the redox reaction to proton translocation (for every two electrons transferred, four hydrogen ions are translocated across the cytoplasmic membrane), and thus conserves the redox energy in a proton gradient. The sequence is that of NADH-quinone oxidoreductase subunit A from Desulforamulus reducens (strain ATCC BAA-1160 / DSM 100696 / MI-1) (Desulfotomaculum reducens).